A 258-amino-acid polypeptide reads, in one-letter code: Alcohol dehydrogenase 2 (258 aa).

9–33 (IFVGGLGFIGYEACKQLMAKNMASF) is a binding site for NAD(+). Serine 137 serves as a coordination point for substrate. Residue tyrosine 150 is the Proton acceptor of the active site.

Belongs to the short-chain dehydrogenases/reductases (SDR) family. Homodimer.

The enzyme catalyses a primary alcohol + NAD(+) = an aldehyde + NADH + H(+). It carries out the reaction a secondary alcohol + NAD(+) = a ketone + NADH + H(+). This Ceratitis cosyra (Mango fruit fly) protein is Alcohol dehydrogenase 2 (ADH2).